Consider the following 277-residue polypeptide: ATP synthase subunit delta (277 aa).

This sequence belongs to the ATPase delta chain family. As to quaternary structure, F-type ATPases have 2 components, F(1) - the catalytic core - and F(0) - the membrane proton channel. F(1) has five subunits: alpha(3), beta(3), gamma(1), delta(1), epsilon(1). F(0) has three main subunits: a(1), b(2) and c(10-14). The alpha and beta chains form an alternating ring which encloses part of the gamma chain. F(1) is attached to F(0) by a central stalk formed by the gamma and epsilon chains, while a peripheral stalk is formed by the delta and b chains.

Its subcellular location is the cell membrane. Functionally, f(1)F(0) ATP synthase produces ATP from ADP in the presence of a proton or sodium gradient. F-type ATPases consist of two structural domains, F(1) containing the extramembraneous catalytic core and F(0) containing the membrane proton channel, linked together by a central stalk and a peripheral stalk. During catalysis, ATP synthesis in the catalytic domain of F(1) is coupled via a rotary mechanism of the central stalk subunits to proton translocation. In terms of biological role, this protein is part of the stalk that links CF(0) to CF(1). It either transmits conformational changes from CF(0) to CF(1) or is implicated in proton conduction. The polypeptide is ATP synthase subunit delta (Bifidobacterium animalis subsp. lactis (strain AD011)).